Reading from the N-terminus, the 174-residue chain is Gamma-crystallin E (174 aa).

Beta/gamma crystallin 'Greek key' domains are found at residues 2 to 40 (GKIT…RVDS) and 41 to 83 (GCWM…RLIP). Positions 84–87 (HSSS) are connecting peptide. 2 Beta/gamma crystallin 'Greek key' domains span residues 88–128 (HRIR…HVME) and 129–171 (GYWV…RRIM).

The protein belongs to the beta/gamma-crystallin family. As to expression, detected in the superior olivary complex and fibers of the ventral aoustic stria of the auditory hindbrain.

In terms of biological role, crystallins are the dominant structural components of the vertebrate eye lens. The chain is Gamma-crystallin E (Cryge) from Rattus norvegicus (Rat).